A 2290-amino-acid polypeptide reads, in one-letter code: Protein Ycf2 (2290 aa).

1638-1645 (GSIGTGRS) provides a ligand contact to ATP.

The protein belongs to the Ycf2 family.

It localises to the plastid. It is found in the chloroplast stroma. Its function is as follows. Probable ATPase of unknown function. Its presence in a non-photosynthetic plant (Epifagus virginiana) and experiments in tobacco indicate that it has an essential function which is probably not related to photosynthesis. In Phalaenopsis aphrodite subsp. formosana (Moth orchid), this protein is Protein Ycf2.